The primary structure comprises 434 residues: Histidine--tRNA ligase (434 aa).

The protein belongs to the class-II aminoacyl-tRNA synthetase family. As to quaternary structure, homodimer.

It is found in the cytoplasm. It carries out the reaction tRNA(His) + L-histidine + ATP = L-histidyl-tRNA(His) + AMP + diphosphate + H(+). The protein is Histidine--tRNA ligase of Latilactobacillus sakei subsp. sakei (strain 23K) (Lactobacillus sakei subsp. sakei).